The primary structure comprises 126 residues: Fluoride-specific ion channel FluC 1 (126 aa).

3 helical membrane passes run 37-57, 67-87, and 98-118; these read HWGT…VLAL, IALL…TFVV, and LLAA…AAAA. Positions 77 and 80 each coordinate Na(+).

The protein belongs to the fluoride channel Fluc/FEX (TC 1.A.43) family.

The protein resides in the cell inner membrane. The catalysed reaction is fluoride(in) = fluoride(out). Na(+) is not transported, but it plays an essential structural role and its presence is essential for fluoride channel function. Functionally, fluoride-specific ion channel. Important for reducing fluoride concentration in the cell, thus reducing its toxicity. The protein is Fluoride-specific ion channel FluC 1 of Parasynechococcus marenigrum (strain WH8102).